Consider the following 351-residue polypeptide: Tropomodulin-2 (351 aa).

Position 25 is a phosphoserine (Ser25).

This sequence belongs to the tropomodulin family. Binds to the N-terminus of tropomyosin and to actin. As to expression, neuronal-tissue specific.

The protein resides in the cytoplasm. Its subcellular location is the cytoskeleton. In terms of biological role, blocks the elongation and depolymerization of the actin filaments at the pointed end. The Tmod/TM complex contributes to the formation of the short actin protofilament, which in turn defines the geometry of the membrane skeleton. This chain is Tropomodulin-2 (Tmod2), found in Mus musculus (Mouse).